The primary structure comprises 60 residues: Large ribosomal subunit protein bL33 (60 aa).

Belongs to the bacterial ribosomal protein bL33 family.

This Chlorobium phaeobacteroides (strain DSM 266 / SMG 266 / 2430) protein is Large ribosomal subunit protein bL33.